The following is a 405-amino-acid chain: Acetate kinase (405 aa).

Residue Asn7 participates in Mg(2+) binding. Lys14 provides a ligand contact to ATP. Position 99 (Arg99) interacts with substrate. Asp156 serves as the catalytic Proton donor/acceptor. 215–219 contacts ATP; sequence HLGNG. Position 391 (Glu391) interacts with Mg(2+).

The protein belongs to the acetokinase family. As to quaternary structure, homodimer. The cofactor is Mg(2+). It depends on Mn(2+) as a cofactor.

The protein resides in the cytoplasm. It carries out the reaction acetate + ATP = acetyl phosphate + ADP. The protein operates within metabolic intermediate biosynthesis; acetyl-CoA biosynthesis; acetyl-CoA from acetate: step 1/2. In terms of biological role, catalyzes the formation of acetyl phosphate from acetate and ATP. Can also catalyze the reverse reaction. In Nostoc sp. (strain PCC 7120 / SAG 25.82 / UTEX 2576), this protein is Acetate kinase.